We begin with the raw amino-acid sequence, 164 residues long: UPF0304 protein YfbU (164 aa).

Belongs to the UPF0304 family.

The sequence is that of UPF0304 protein YfbU from Shigella flexneri.